The primary structure comprises 484 residues: Suppressor of fused homolog (484 aa).

A disordered region spans residues methionine 1–proline 24. Over residues proline 12–proline 23 the composition is skewed to pro residues. Lysine 257 is covalently cross-linked (Glycyl lysine isopeptide (Lys-Gly) (interchain with G-Cter in ubiquitin)). The tract at residues serine 279 to leucine 360 is disordered. Phosphoserine is present on serine 301. At lysine 303 the chain carries N6-acetyllysine. A Glycyl lysine isopeptide (Lys-Gly) (interchain with G-Cter in SUMO2) cross-link involves residue lysine 321. A compositionally biased stretch (basic and acidic residues) spans alanine 336–leucine 347. Phosphoserine occurs at positions 342, 346, and 352. Threonine 353 carries the post-translational modification Phosphothreonine. Residue serine 481 is modified to Phosphoserine.

The protein belongs to the SUFU family. As to quaternary structure, may form homodimers. Part of a DNA-bound corepressor complex containing SAP18, GLI1 and SIN3. Part of a complex containing CTNNB1. Binds BTRC, GLI2, GLI3, SAP18 and STK36. Binds both free and DNA-bound GLI1. Interacts with KIF7. Interacts with GLI3FL and this interaction regulates the formation of either repressor or activator forms of GLI3. Its association with GLI3FL is regulated by Hh signaling and dissociation of the SUFU-GLI3 interaction requires the presence of the ciliary motor KIF3A. Interacts with ULK3; inactivating the protein kinase activity of ULK3. Interacts with RAB23. In terms of processing, polyubiquitinated at Lys-257 by the SCF(FBXL17) complex, leading to its subsequent degradation and allowing the release of GLI1 for proper hedgehog/smoothened signal transduction. Ubiquitination is impaired by phosphorylation at Ser-342, Ser-346, Ser-352 and Thr-353. Post-translationally, phosphorylation at Ser-342, Ser-346, Ser-352 and Thr-353 prevents ubiquitination by the SCF(FBXL17) complex. As to expression, ubiquitous in adult tissues. Detected in osteoblasts of the perichondrium in the developing limb of 12-week old embryos. Isoform 1 is detected in fetal brain, lung, kidney and testis. Isoform 2 is detected in fetal testis, and at much lower levels in fetal brain, lung and kidney.

The protein resides in the cytoplasm. It localises to the nucleus. Negative regulator in the hedgehog/smoothened signaling pathway. Down-regulates GLI1-mediated transactivation of target genes. Down-regulates GLI2-mediated transactivation of target genes. Part of a corepressor complex that acts on DNA-bound GLI1. May also act by linking GLI1 to BTRC and thereby targeting GLI1 to degradation by the proteasome. Sequesters GLI1, GLI2 and GLI3 in the cytoplasm, this effect is overcome by binding of STK36 to both SUFU and a GLI protein. Negative regulator of beta-catenin signaling. Regulates the formation of either the repressor form (GLI3R) or the activator form (GLI3A) of the full-length form of GLI3 (GLI3FL). GLI3FL is complexed with SUFU in the cytoplasm and is maintained in a neutral state. Without the Hh signal, the SUFU-GLI3 complex is recruited to cilia, leading to the efficient processing of GLI3FL into GLI3R. When Hh signaling is initiated, SUFU dissociates from GLI3FL and the latter translocates to the nucleus, where it is phosphorylated, destabilized, and converted to a transcriptional activator (GLI3A). Required for normal embryonic development. Required for the proper formation of hair follicles and the control of epidermal differentiation. This chain is Suppressor of fused homolog, found in Homo sapiens (Human).